The primary structure comprises 828 residues: MSGWRKIYYKLLNLPLKLLVKSKVIPADPVSELGLDPSRPILYVLPYNSKADLLTLRAQCLAQDLPDPLIPLEIDGVQLPSHVFIENGPRVFRYYVPKQESVKLFHDYLDLHRNNPALDIQMLPVSVMFGRSPGREGHGTPHLRVLNGVQKFFAVLWLGRDSFVRFSTTVSLRRMASEHGTDKTIAHKLARVARMHFSRQRLAAVGPSLPARQDLFKKLLASKAIEKAVADEARSKKISHEKAQQNAITLMEEIAANFSYEAVRLSDRVLSWTWNRLYQGINVHNAERVRQLAQDGHEIVYVPCHRSHMDYLLLSYVLYHQGLVPPHIAAGINLNFWPAGPIFRRLGAFFIRRTFKGNKLYSTVFREYLGELFTRGYSVEYFVEGGRSRTGRLLEPKTGTLSMTIQAMLRGGTRPITLVPIYIGYEHVMEVGTYAKELRGAIKEKENLLQMLRGLRKLRNLGQGYVNFGEPLPLTTYLNTHVPQWRDAIDPIEAQRPSWLTPAVNDLANQIMVRINNAAAANAMNLCSTALLASRQRSLTREQLLEQLDCYLQLMRNAPYAKDTTVPDKTPEELLNHALNMNKFEVEKDTIGDIIILPREQAVLMTYYRNNIQHLLILPSLIASMVMYHRRITRTELLHKISMIYPMLKAELFLHYSKEQLPETLDTLIDELARQQLICDKGSELVLNPARIRPLQLLAAGVRETLQRYAITLSLLSATPSINRGALEKESRIMAQRLSVLHGINAPEFFDKAVFSTLVATLREEGYISDSGDAIQEHTLEVYNMLSALMTPEVKLTIESVSMPAETSNQPEAPETPETPEPEGKTES.

Residues 304 to 309 (CHRSHM) carry the HXXXXD motif motif. The interval 802 to 828 (SMPAETSNQPEAPETPETPEPEGKTES) is disordered.

It belongs to the GPAT/DAPAT family.

It is found in the cell inner membrane. It carries out the reaction sn-glycerol 3-phosphate + an acyl-CoA = a 1-acyl-sn-glycero-3-phosphate + CoA. The protein operates within phospholipid metabolism; CDP-diacylglycerol biosynthesis; CDP-diacylglycerol from sn-glycerol 3-phosphate: step 1/3. This is Glycerol-3-phosphate acyltransferase from Yersinia pseudotuberculosis serotype O:3 (strain YPIII).